The primary structure comprises 116 residues: Somatostatin (116 aa).

Residues 1–24 (MLSCRLQCALALLSIALAVGTVSA) form the signal peptide. Positions 25–88 (APSDPRLRQF…QDEVRLELER (64 aa)) are excised as a propeptide. The tract at residues 60–82 (PSQTENEALESEDLSRGAEQDEV) is disordered. The span at 72-82 (DLSRGAEQDEV) shows a compositional bias: basic and acidic residues. Residues Cys105 and Cys116 are joined by a disulfide bond.

The protein belongs to the somatostatin family.

The protein resides in the secreted. Somatostatin inhibits the release of somatotropin. The sequence is that of Somatostatin (SST) from Gallus gallus (Chicken).